A 150-amino-acid chain; its full sequence is SsrA-binding protein (150 aa).

It belongs to the SmpB family.

Its subcellular location is the cytoplasm. Its function is as follows. Required for rescue of stalled ribosomes mediated by trans-translation. Binds to transfer-messenger RNA (tmRNA), required for stable association of tmRNA with ribosomes. tmRNA and SmpB together mimic tRNA shape, replacing the anticodon stem-loop with SmpB. tmRNA is encoded by the ssrA gene; the 2 termini fold to resemble tRNA(Ala) and it encodes a 'tag peptide', a short internal open reading frame. During trans-translation Ala-aminoacylated tmRNA acts like a tRNA, entering the A-site of stalled ribosomes, displacing the stalled mRNA. The ribosome then switches to translate the ORF on the tmRNA; the nascent peptide is terminated with the 'tag peptide' encoded by the tmRNA and targeted for degradation. The ribosome is freed to recommence translation, which seems to be the essential function of trans-translation. The sequence is that of SsrA-binding protein from Campylobacter jejuni subsp. doylei (strain ATCC BAA-1458 / RM4099 / 269.97).